The sequence spans 264 residues: tRNA1(Val) (adenine(37)-N6)-methyltransferase (264 aa).

This sequence belongs to the methyltransferase superfamily. tRNA (adenine-N(6)-)-methyltransferase family.

The protein resides in the cytoplasm. The enzyme catalyses adenosine(37) in tRNA1(Val) + S-adenosyl-L-methionine = N(6)-methyladenosine(37) in tRNA1(Val) + S-adenosyl-L-homocysteine + H(+). Its function is as follows. Specifically methylates the adenine in position 37 of tRNA(1)(Val) (anticodon cmo5UAC). This is tRNA1(Val) (adenine(37)-N6)-methyltransferase from Shewanella pealeana (strain ATCC 700345 / ANG-SQ1).